The following is a 257-amino-acid chain: Snake venom serine protease KN11 (257 aa).

The first 18 residues, 1–18, serve as a signal peptide directing secretion; the sequence is MVLIRVLANLLILQLSYA. Positions 19–24 are excised as a propeptide; it reads QKSSEL. The Peptidase S1 domain maps to 25–248; the sequence is VTGGHPCNIN…HLDWIKSIIA (224 aa). Cystine bridges form between Cys31-Cys162, Cys49-Cys65, Cys97-Cys255, Cys141-Cys209, Cys173-Cys188, and Cys199-Cys224. Residues His64 and Asp109 each act as charge relay system in the active site. Residues Asn120 and Asn121 are each glycosylated (N-linked (GlcNAc...) asparagine). The active-site Charge relay system is the Ser203.

This sequence belongs to the peptidase S1 family. Snake venom subfamily. In terms of assembly, monomer. Expressed by the venom gland.

The protein resides in the secreted. Snake venom serine protease that may act in the hemostasis system of the prey. The sequence is that of Snake venom serine protease KN11 from Trimeresurus stejnegeri (Chinese green tree viper).